We begin with the raw amino-acid sequence, 464 residues long: ATP synthase subunit beta 2 (464 aa).

147 to 154 contributes to the ATP binding site; that stretch reads GGAGVGKT.

It belongs to the ATPase alpha/beta chains family. In terms of assembly, F-type ATPases have 2 components, CF(1) - the catalytic core - and CF(0) - the membrane proton channel. CF(1) has five subunits: alpha(3), beta(3), gamma(1), delta(1), epsilon(1). CF(0) has four main subunits: a(1), b(1), b'(1) and c(9-12).

It is found in the cell inner membrane. It carries out the reaction ATP + H2O + 4 H(+)(in) = ADP + phosphate + 5 H(+)(out). Produces ATP from ADP in the presence of a proton gradient across the membrane. The catalytic sites are hosted primarily by the beta subunits. The chain is ATP synthase subunit beta 2 from Cereibacter sphaeroides (strain ATCC 17023 / DSM 158 / JCM 6121 / CCUG 31486 / LMG 2827 / NBRC 12203 / NCIMB 8253 / ATH 2.4.1.) (Rhodobacter sphaeroides).